The sequence spans 224 residues: Protein LURP-one-related 1 (224 aa).

Residues 1 to 23 (MQQPYEYRYPQGTGPSAPPPPPK) form a disordered region.

It belongs to the LOR family.

Functionally, might be related to the phospholipid scramblase and tubby-like superfamily of membrane tethered transcription factors. This is Protein LURP-one-related 1 from Arabidopsis thaliana (Mouse-ear cress).